A 370-amino-acid chain; its full sequence is Protein-glutamate methylesterase/protein-glutamine glutaminase of group 1 operon (370 aa).

The Response regulatory domain occupies 4–121 (KVLVVDDSGF…SRNPDKVKQL (118 aa)). D55 is subject to 4-aspartylphosphate. Residues 150-180 (PASTFTSQAQTRPAAPARAAAPTPAASQSPA) show a composition bias toward low complexity. Residues 150–183 (PASTFTSQAQTRPAAPARAAAPTPAASQSPAPKR) form a disordered region. The 192-residue stretch at 179–370 (PAPKRKPYKL…IGKHLVEACV (192 aa)) folds into the CheB-type methylesterase domain. Residues S194, H221, and D314 contribute to the active site.

Belongs to the CheB family. Post-translationally, phosphorylated by CheA. Phosphorylation of the N-terminal regulatory domain activates the methylesterase activity.

The protein resides in the cytoplasm. The enzyme catalyses [protein]-L-glutamate 5-O-methyl ester + H2O = L-glutamyl-[protein] + methanol + H(+). It carries out the reaction L-glutaminyl-[protein] + H2O = L-glutamyl-[protein] + NH4(+). Involved in chemotaxis. Part of a chemotaxis signal transduction system that modulates chemotaxis in response to various stimuli. Catalyzes the demethylation of specific methylglutamate residues introduced into the chemoreceptors (methyl-accepting chemotaxis proteins or MCP) by CheR. Also mediates the irreversible deamidation of specific glutamine residues to glutamic acid. The protein is Protein-glutamate methylesterase/protein-glutamine glutaminase of group 1 operon of Pseudomonas putida (strain ATCC 47054 / DSM 6125 / CFBP 8728 / NCIMB 11950 / KT2440).